The primary structure comprises 89 residues: MAIEQTQKDEIIKQYARHDGDTGSPEVQIAVLTAEILALNDHLSVHKKDHHSYVGLMKKIGHRRNLLAYLRNKDITRYRDLIKALGLRR.

The protein belongs to the universal ribosomal protein uS15 family. Part of the 30S ribosomal subunit. Forms a bridge to the 50S subunit in the 70S ribosome, contacting the 23S rRNA.

One of the primary rRNA binding proteins, it binds directly to 16S rRNA where it helps nucleate assembly of the platform of the 30S subunit by binding and bridging several RNA helices of the 16S rRNA. Functionally, forms an intersubunit bridge (bridge B4) with the 23S rRNA of the 50S subunit in the ribosome. The protein is Small ribosomal subunit protein uS15 of Lacticaseibacillus casei (strain BL23) (Lactobacillus casei).